Consider the following 1472-residue polypeptide: Vacuolar cation-transporting ATPase YPK9 (1472 aa).

Methionine 1 bears the N-acetylmethionine mark. Composition is skewed to polar residues over residues 1–12 (MDIPSSNQIQHG) and 72–87 (SFQS…SGNL). Disordered stretches follow at residues 1–32 (MDIP…TATT), 71–115 (HSFQ…SRNP), and 179–273 (AKSY…DDVH). At 1-293 (MDIPSSNQIQ…YHEKFYPQYA (293 aa)) the chain is on the cytoplasmic side. Position 95 is a phosphothreonine (threonine 95). Composition is skewed to low complexity over residues 103-115 (SSAE…SRNP) and 211-222 (SATHSSSSLSRY). Serine 108 carries the phosphoserine modification. Residues 234–243 (SQTDEILEDE) are compositionally biased toward acidic residues. The chain crosses the membrane as a helical span at residues 294–315 (PNLHYQRFYIAEEDLVIGIAAY). Residues 316 to 321 (QTSKFW) are Vacuolar-facing. A helical transmembrane segment spans residues 322–344 (YIIYNLCCFLTFGLVYLLTRWLP). Residues 345-488 (HLKVKLYGVK…INLRMKTTSE (144 aa)) lie on the Cytoplasmic side of the membrane. The chain crosses the membrane as a helical span at residues 489 to 511 (ILFNEVLHPFYVFQVFSIILWGI). At 512–514 (DEY) the chain is on the vacuolar side. The chain crosses the membrane as a helical span at residues 515 to 533 (YYYAACIFLISVLSIFDSL). Residues 534-693 (NEQKKVSRNL…PTGFKFYRDS (160 aa)) lie on the Cytoplasmic side of the membrane. Residues 694–713 (FKYIGFMSLIAIFGFCVSCV) traverse the membrane as a helical segment. Residues 714–726 (QFIKLGLDKKTMI) lie on the Vacuolar side of the membrane. Residues 727 to 748 (LRALDIITIVVPPALPATLTIG) form a helical membrane-spanning segment. Topologically, residues 749 to 1244 (TNFALSRLKE…ALVTSFACFQ (496 aa)) are cytoplasmic. The active-site 4-aspartylphosphate intermediate is aspartate 781. Serine 1117 and serine 1120 each carry phosphoserine. 2 residues coordinate Mg(2+): aspartate 1187 and aspartate 1191. A helical membrane pass occupies residues 1245-1264 (YMSLYSAIQFITITILYSRG). The Vacuolar segment spans residues 1265 to 1271 (SNLGDFQ). The helical transmembrane segment at 1272–1289 (FLYIDLLLIVPIAICMSW) threads the bilayer. Over 1290–1307 (SKSYEKIDKKRPSANLVS) the chain is Cytoplasmic. A helical transmembrane segment spans residues 1308–1331 (PKILVPLLISVFLVFLFQFIPWII). Over 1332–1351 (VQKMSWYIKPIVGGDDAVQS) the chain is Vacuolar. Residues 1352–1374 (SDNTVLFFVSNFQYILTAIVLSV) traverse the membrane as a helical segment. Residues 1375-1387 (GPPYREPMSKNFE) lie on the Cytoplasmic side of the membrane. A helical membrane pass occupies residues 1388-1407 (FIVDITVSIGASLLLMTLDT). The Vacuolar portion of the chain corresponds to 1408-1423 (ESYLGKMLQLTPISNS). Residues 1424–1446 (FTMFIIVWVILNYYAQLYIPPSI) form a helical membrane-spanning segment. Residues 1447–1472 (KGWLKKKKSSKKYKLLIQEEMKLKEV) are Cytoplasmic-facing.

Belongs to the cation transport ATPase (P-type) (TC 3.A.3) family. Type V subfamily.

It localises to the vacuole membrane. The enzyme catalyses ATP + H2O = ADP + phosphate + H(+). In terms of biological role, vacuolar transporter which plays a role in sequestration of divalent heavy metal ions. This Saccharomyces cerevisiae (strain ATCC 204508 / S288c) (Baker's yeast) protein is Vacuolar cation-transporting ATPase YPK9 (YPK9).